We begin with the raw amino-acid sequence, 510 residues long: Cytochrome c-552 (510 aa).

The N-terminal stretch at 1–50 is a signal peptide; that stretch reads MVVFLFILYRQSDLKFKSMNGVIIVNTLKKRLFVATTMIWGLSVTLPVLA. Heme c is bound at residue histidine 124. Heme-binding residues include cysteine 152, cysteine 155, and lysine 156. 6 residues coordinate heme c: cysteine 190, cysteine 193, histidine 194, cysteine 239, cysteine 242, and histidine 243. 4 residues coordinate Ca(2+): glutamate 245, tyrosine 246, lysine 291, and glutamine 293. Substrate is bound at residue tyrosine 246. Residue histidine 294 participates in substrate binding. Heme c is bound by residues histidine 305, cysteine 312, cysteine 315, histidine 316, histidine 331, cysteine 344, cysteine 347, histidine 348, and histidine 423.

Belongs to the cytochrome c-552 family. Ca(2+) is required as a cofactor. The cofactor is heme c.

It is found in the periplasm. It catalyses the reaction 6 Fe(III)-[cytochrome c] + NH4(+) + 2 H2O = 6 Fe(II)-[cytochrome c] + nitrite + 8 H(+). It functions in the pathway nitrogen metabolism; nitrate reduction (assimilation). In terms of biological role, catalyzes the reduction of nitrite to ammonia, consuming six electrons in the process. This is Cytochrome c-552 from Pasteurella multocida (strain Pm70).